The following is a 390-amino-acid chain: Alcohol dehydrogenase-like 7 (390 aa).

Zn(2+)-binding residues include Cys-56, Ser-58, His-78, Cys-108, Cys-111, Cys-114, Cys-122, and Cys-187. Positions 58 and 78 each coordinate an alcohol. Position 58 (Ser-58) interacts with NAD(+). NAD(+) contacts are provided by residues 212 to 217 (GLGSIG), Asp-236, Lys-241, 306 to 308 (LGV), Phe-334, and Arg-384.

Belongs to the zinc-containing alcohol dehydrogenase family. Class-III subfamily. In terms of assembly, homodimer. Zn(2+) is required as a cofactor.

It is found in the cytoplasm. The enzyme catalyses a primary alcohol + NAD(+) = an aldehyde + NADH + H(+). The catalysed reaction is a secondary alcohol + NAD(+) = a ketone + NADH + H(+). In Arabidopsis thaliana (Mouse-ear cress), this protein is Alcohol dehydrogenase-like 7.